The following is a 154-amino-acid chain: Large ribosomal subunit protein uL22 (154 aa).

It belongs to the universal ribosomal protein uL22 family. Part of the 50S ribosomal subunit.

This protein binds specifically to 23S rRNA. It makes multiple contacts with different domains of the 23S rRNA in the assembled 50S subunit and ribosome. In terms of biological role, the globular domain of the protein is located near the polypeptide exit tunnel on the outside of the subunit, while an extended beta-hairpin is found that lines the wall of the exit tunnel in the center of the 70S ribosome. The polypeptide is Large ribosomal subunit protein uL22 (Methanosphaera stadtmanae (strain ATCC 43021 / DSM 3091 / JCM 11832 / MCB-3)).